Reading from the N-terminus, the 156-residue chain is Small ribosomal subunit protein uS7 (156 aa).

This sequence belongs to the universal ribosomal protein uS7 family. Part of the 30S ribosomal subunit. Contacts proteins S9 and S11.

Functionally, one of the primary rRNA binding proteins, it binds directly to 16S rRNA where it nucleates assembly of the head domain of the 30S subunit. Is located at the subunit interface close to the decoding center, probably blocks exit of the E-site tRNA. This Dehalococcoides mccartyi (strain ATCC BAA-2266 / KCTC 15142 / 195) (Dehalococcoides ethenogenes (strain 195)) protein is Small ribosomal subunit protein uS7.